The sequence spans 312 residues: Ribosomal RNA small subunit methyltransferase H (312 aa).

Residues 33 to 35 (AGH), Asp53, Phe79, Asp100, and Gln107 each bind S-adenosyl-L-methionine.

The protein belongs to the methyltransferase superfamily. RsmH family.

Its subcellular location is the cytoplasm. It carries out the reaction cytidine(1402) in 16S rRNA + S-adenosyl-L-methionine = N(4)-methylcytidine(1402) in 16S rRNA + S-adenosyl-L-homocysteine + H(+). Specifically methylates the N4 position of cytidine in position 1402 (C1402) of 16S rRNA. The polypeptide is Ribosomal RNA small subunit methyltransferase H (Clostridium acetobutylicum (strain ATCC 824 / DSM 792 / JCM 1419 / IAM 19013 / LMG 5710 / NBRC 13948 / NRRL B-527 / VKM B-1787 / 2291 / W)).